A 122-amino-acid chain; its full sequence is Glycine cleavage system H protein (122 aa).

A Lipoyl-binding domain is found at 19-101 (VVTVGITNYA…EKEGWLWKMT (83 aa)). Lysine 60 bears the N6-lipoyllysine mark.

The protein belongs to the GcvH family. As to quaternary structure, the glycine cleavage system is composed of four proteins: P, T, L and H. (R)-lipoate is required as a cofactor.

The glycine cleavage system catalyzes the degradation of glycine. The H protein shuttles the methylamine group of glycine from the P protein to the T protein. The polypeptide is Glycine cleavage system H protein (Bartonella quintana (strain Toulouse) (Rochalimaea quintana)).